We begin with the raw amino-acid sequence, 502 residues long: Ribose import ATP-binding protein RbsA (502 aa).

ABC transporter domains lie at isoleucine 6–aspartate 242 and alanine 253–arginine 496. Glycine 38–serine 45 lines the ATP pocket.

Belongs to the ABC transporter superfamily. Ribose importer (TC 3.A.1.2.1) family. As to quaternary structure, the complex is composed of an ATP-binding protein (RbsA), two transmembrane proteins (RbsC) and a solute-binding protein (RbsB).

The protein resides in the cell inner membrane. The catalysed reaction is D-ribose(out) + ATP + H2O = D-ribose(in) + ADP + phosphate + H(+). Functionally, part of the ABC transporter complex RbsABC involved in ribose import. Responsible for energy coupling to the transport system. This is Ribose import ATP-binding protein RbsA from Cereibacter sphaeroides (strain ATCC 17023 / DSM 158 / JCM 6121 / CCUG 31486 / LMG 2827 / NBRC 12203 / NCIMB 8253 / ATH 2.4.1.) (Rhodobacter sphaeroides).